The following is an 88-amino-acid chain: Small ribosomal subunit protein bS16 (88 aa).

This sequence belongs to the bacterial ribosomal protein bS16 family.

This Syntrophomonas wolfei subsp. wolfei (strain DSM 2245B / Goettingen) protein is Small ribosomal subunit protein bS16.